Reading from the N-terminus, the 422-residue chain is Mannosylglycerate synthase (422 aa).

GDP-alpha-D-mannose contacts are provided by residues 7–11 (PFKEE), Gln-66, Lys-77, Asp-101, and 101–102 (DS). (R)-glycerate-binding positions include Arg-132 and 137–140 (AMIT). Positions 164, 193, and 221 each coordinate GDP-alpha-D-mannose.

It belongs to the glycosyltransferase 78 family.

The catalysed reaction is (R)-glycerate + GDP-alpha-D-mannose = (2R)-2-O-(alpha-D-mannosyl)-glycerate + GDP + H(+). It carries out the reaction GDP-alpha-D-glucose + (R)-glycerate = (2R)-2-O-(alpha-D-glucopyranosyl)-glycerate + GDP + H(+). Activity is not dependent on divalent cations, but it is enhanced by Mg(2+). In terms of biological role, involved in the biosynthesis of the compatible solute alpha-D-mannosyl-glycerate (MG). Catalyzes the condensation of GDP-alpha-D-mannose (GDP-Man) with D-glycerate to produce alpha-D-mannosyl-glycerate. Can also use GDP-alpha-D-glucose (GDP-Glc) as sugar donor to produce alpha-D-glucopyranosyl-glycerate (GG). This is Mannosylglycerate synthase from Selaginella moellendorffii (Spikemoss).